The chain runs to 609 residues: MKWVTFISLLFLFSSAYSRGVFRRDAHKSEVAHRFKDLGEEKFKALVLIAFAQYLQQCPFEDHVKLVNEVTEFAKTCVADESAENCDKSLHTLFGDKLCTVATLRETYGEMADCCAKQEPERNECFLQHKDDNPNLPRLVRPEVDVMCTAFHDNEETFLKKYLYEIARRHPYFYAPELLFFAVRYKAAFTECCQAADKAACLLPKLDELRDEGKASSAKQRLKCASLQKFGERAFKAWAVARLSQRFPKAEFAEVSKLVTDLTKVHTECCHGDLLECADDRADLAKYICENQDSISSKLKECCEKPLLEKSHCLAEVENDEMPADLPSLAADFVESKDVCKNYAEAKDVFLGMFLYEYARRHPDYSVVLLLRLAKTYETTLEKCCAAADPHECYAKVFDEFKPLVEEPQNLIKQNCELFEQLGEYKFQNELLVRYTKKVPQVSTPTLVEVSRNLGKVGSKCCKHPEPKRMPCAEDYLSVVLNQLCVLHEKTPVSERVTKCCTESLVNRRPCFSALEVDETYVPKEFNADTFTFHADICTLSEKERQIKKQTALVELVKHKPKATKEQLKTVMEDFAAFVEKCCKADDKETCFAEEGKKLVAASQAALGL.

Positions 1–18 are cleaved as a signal peptide; the sequence is MKWVTFISLLFLFSSAYS. A propeptide spanning residues 19 to 24 is cleaved from the precursor; that stretch reads RGVFRR. 3 consecutive Albumin domains span residues 19–210, 211–403, and 404–601; these read RGVF…DELR, DEGK…EFKP, and LVEE…KLVA. Position 27 (His27) interacts with Cu cation. The residue at position 29 (Ser29) is a Phosphoserine. Ca(2+) contacts are provided by Glu30 and Asp37. An intrachain disulfide couples Cys77 to Cys86. A phosphoserine mark is found at Ser82 and Ser89. His91 provides a ligand contact to Zn(2+). Disulfide bonds link Cys99/Cys115, Cys114/Cys125, Cys148/Cys193, Cys192/Cys201, Cys224/Cys270, and Cys269/Cys277. Thr107 carries the phosphothreonine modification. N6-succinyllysine is present on Lys229. Lys264 contributes to the (4Z,15Z)-bilirubin IXalpha binding site. Glu268 provides a ligand contact to Ca(2+). The Zn(2+) site is built by His271 and Asp273. Residues Asp273, Glu276, Asp279, and Asp283 each coordinate Ca(2+). 8 disulfide bridges follow: Cys289–Cys303, Cys302–Cys313, Cys340–Cys385, Cys384–Cys393, Cys416–Cys462, Cys461–Cys472, Cys485–Cys501, and Cys500–Cys511. At Ser297 the chain carries Phosphoserine. Ser443 carries the phosphoserine modification. Phosphothreonine occurs at positions 444 and 446. The residue at position 460 (Lys460) is an N6-succinyllysine. Position 513 is a phosphoserine (Ser513). 2 disulfides stabilise this stretch: Cys538–Cys583 and Cys582–Cys591. Lys543 is modified (N6-succinyllysine). Residue Lys558 is modified to N6-methyllysine. Thr570 bears the Phosphothreonine mark. Residue Lys588 is modified to N6-succinyllysine.

The protein belongs to the ALB/AFP/VDB family. In terms of assembly, interacts with FCGRT; this interaction regulates ALB homeostasis. Interacts with TASOR. In plasma, occurs in a covalently-linked complex with chromophore-bound alpha-1-microglobulin; this interaction does not prevent fatty acid binding to ALB. Post-translationally, phosphorylated by FAM20C in the extracellular medium. In terms of tissue distribution, plasma.

It is found in the secreted. Binds water, Ca(2+), Na(+), K(+), fatty acids, hormones, bilirubin and drugs. Its main function is the regulation of the colloidal osmotic pressure of blood. Major zinc transporter in plasma, typically binds about 80% of all plasma zinc. Major calcium and magnesium transporter in plasma, binds approximately 45% of circulating calcium and magnesium in plasma. Potentially has more than two calcium-binding sites and might additionally bind calcium in a non-specific manner. The shared binding site between zinc and calcium at residue Asp-273 suggests a crosstalk between zinc and calcium transport in the blood. The rank order of affinity is zinc &gt; calcium &gt; magnesium. Binds to the bacterial siderophore enterobactin and inhibits enterobactin-mediated iron uptake of E.coli from ferric transferrin, and may thereby limit the utilization of iron and growth of enteric bacteria such as E.coli. Does not prevent iron uptake by the bacterial siderophore aerobactin. This chain is Albumin (ALB), found in Pongo abelii (Sumatran orangutan).